A 110-amino-acid polypeptide reads, in one-letter code: UPF0122 protein lwe1821 (110 aa).

Belongs to the UPF0122 family.

Functionally, might take part in the signal recognition particle (SRP) pathway. This is inferred from the conservation of its genetic proximity to ftsY/ffh. May be a regulatory protein. The protein is UPF0122 protein lwe1821 of Listeria welshimeri serovar 6b (strain ATCC 35897 / DSM 20650 / CCUG 15529 / CIP 8149 / NCTC 11857 / SLCC 5334 / V8).